The sequence spans 921 residues: GPI ethanolamine phosphate transferase 1 (921 aa).

Residues 37 to 57 (PGHVALIAGLYEDVSAVTTGW) form a helical membrane-spanning segment. N69 and N132 each carry an N-linked (GlcNAc...) asparagine glycan. 10 consecutive transmembrane segments (helical) span residues 386 to 406 (ALIT…VIDL), 418 to 438 (TLIG…SFAI), 441 to 461 (SPLT…EVYA), 483 to 503 (FVSL…LALG), 509 to 529 (ILTI…FSFL), 533 to 553 (MALS…TLLP), 561 to 581 (VNMI…YLIL), 606 to 626 (LVGI…SSAL), 640 to 660 (VMGW…RAKP), and 679 to 699 (FVIL…AVLV). Residues 715 to 737 (SANGAARSAPSPAKPHNLETSQT) are disordered. 4 helical membrane passes run 752–772 (VALF…NVAS), 795–815 (AMLI…LGIL), 825–845 (ALFM…FWVV), and 862–882 (VIAS…AMFI).

This sequence belongs to the PIGG/PIGN/PIGO family. PIGN subfamily.

Its subcellular location is the endoplasmic reticulum membrane. Its pathway is glycolipid biosynthesis; glycosylphosphatidylinositol-anchor biosynthesis. Functionally, ethanolamine phosphate transferase involved in glycosylphosphatidylinositol-anchor biosynthesis. Transfers ethanolamine phosphate to the first alpha-1,4-linked mannose of the glycosylphosphatidylinositol precursor of GPI-anchor. The protein is GPI ethanolamine phosphate transferase 1 (MCD4) of Chaetomium globosum (strain ATCC 6205 / CBS 148.51 / DSM 1962 / NBRC 6347 / NRRL 1970) (Soil fungus).